The chain runs to 573 residues: Estrogen receptor beta (573 aa).

Residues 15–170 (QEVDSSKVGE…CFAGKGDMHF (156 aa)) form a modulating region. 2 consecutive NR C4-type zinc fingers follow at residues 171 to 191 (CAVC…CEGC) and 207 to 231 (CPAT…LRKC). A DNA-binding region (nuclear receptor) is located at residues 171–236 (CAVCHDYASG…RLRKCYEVGM (66 aa)). The NR LBD domain occupies 291 to 527 (TPEQLINRII…DLLLEMLDAN (237 aa)). Composition is skewed to low complexity over residues 534–552 (MSAS…AQSQ) and 559–573 (CSGE…SSTI). The tract at residues 534–573 (MSASYSSQPSPWSQAAQSQPGPPPSCSGECPCPPKESSTI) is disordered.

Belongs to the nuclear hormone receptor family. NR3 subfamily. In terms of assembly, binds DNA as a homodimer. Can form a heterodimer with ER-alpha. In terms of tissue distribution, liver.

The protein localises to the nucleus. Binds estrogens with an affinity similar to that of ER-alpha, and activates expression of reporter genes containing estrogen response elements (ERE) in an estrogen-dependent manner. In Anguilla japonica (Japanese eel), this protein is Estrogen receptor beta (esr2).